The chain runs to 163 residues: Protein VASCULATURE COMPLEXITY AND CONNECTIVITY (163 aa).

The N-terminal stretch at 1–27 is a signal peptide; it reads MTKIGGILVCLVIVGLDVAAAILGIQA. The next 3 helical transmembrane spans lie at 54–74, 95–115, and 133–153; these read LGLG…LVGG, MACL…IVIG, and FLSI…AYYV.

Belongs to the DESIGUAL family. Interacts with OPS. As to expression, expressed in vascular cells, mostly in hypocotyls, and, to a lower extent, in seedlings, roots, flowers, siliques, developing leaves and inflorescences, but barely in mature leaves and seeds. High levels in leaf primordia.

It is found in the endoplasmic reticulum membrane. In terms of biological role, required, together with OPS, for embryo provasculature development and cotyledon vascular complexity and connectivity. Necessary, partially redundantly with DEAL2 and DEAL3, to ensure bilateral symmetry development and early leaf margin patterning, probably via the regulation of auxin and CUC2 distribution. Regulates cell proliferation but not cell expansion. The protein is Protein VASCULATURE COMPLEXITY AND CONNECTIVITY of Arabidopsis thaliana (Mouse-ear cress).